A 91-amino-acid polypeptide reads, in one-letter code: Small ribosomal subunit protein uS19 (91 aa).

This sequence belongs to the universal ribosomal protein uS19 family.

Functionally, protein S19 forms a complex with S13 that binds strongly to the 16S ribosomal RNA. The sequence is that of Small ribosomal subunit protein uS19 from Metamycoplasma hominis (strain ATCC 23114 / DSM 25592 / NBRC 14850 / NCTC 10111 / PG21) (Mycoplasma hominis).